Consider the following 92-residue polypeptide: Small ribosomal subunit protein uS19 (92 aa).

Belongs to the universal ribosomal protein uS19 family.

Functionally, protein S19 forms a complex with S13 that binds strongly to the 16S ribosomal RNA. The chain is Small ribosomal subunit protein uS19 from Buchnera aphidicola subsp. Schizaphis graminum (strain Sg).